The sequence spans 314 residues: BCL2/adenovirus E1B 19 kDa protein-interacting protein 2 (314 aa).

The segment at 1-21 (MEGVELKEEWQDEDFPIPLPE) is disordered. Over residues 10–21 (WQDEDFPIPLPE) the composition is skewed to acidic residues. Residues Ser-41 and Ser-77 each carry the phosphoserine modification. Residues 76-100 (ESGEIDLDGLDTPSENSNEFEWEDD) are disordered. The residue at position 87 (Thr-87) is a Phosphothreonine. Phosphoserine is present on residues Ser-89, Ser-92, and Ser-114. Residues 147-304 (IEPYKKVISH…CIKQVDQELN (158 aa)) form the CRAL-TRIO domain.

The protein resides in the cytoplasm. The protein localises to the perinuclear region. Its function is as follows. Implicated in the suppression of cell death. Interacts with the BCL-2 and adenovirus E1B 19 kDa proteins. The chain is BCL2/adenovirus E1B 19 kDa protein-interacting protein 2 (BNIP2) from Homo sapiens (Human).